The sequence spans 97 residues: Co-chaperonin GroES (97 aa).

It belongs to the GroES chaperonin family. Heptamer of 7 subunits arranged in a ring. Interacts with the chaperonin GroEL.

It localises to the cytoplasm. Functionally, together with the chaperonin GroEL, plays an essential role in assisting protein folding. The GroEL-GroES system forms a nano-cage that allows encapsulation of the non-native substrate proteins and provides a physical environment optimized to promote and accelerate protein folding. GroES binds to the apical surface of the GroEL ring, thereby capping the opening of the GroEL channel. In Klebsiella pneumoniae subsp. pneumoniae (strain ATCC 700721 / MGH 78578), this protein is Co-chaperonin GroES.